Here is a 342-residue protein sequence, read N- to C-terminus: Phosphoribosylformylglycinamidine cyclo-ligase (342 aa).

Belongs to the AIR synthase family.

The protein localises to the cytoplasm. The enzyme catalyses 2-formamido-N(1)-(5-O-phospho-beta-D-ribosyl)acetamidine + ATP = 5-amino-1-(5-phospho-beta-D-ribosyl)imidazole + ADP + phosphate + H(+). It functions in the pathway purine metabolism; IMP biosynthesis via de novo pathway; 5-amino-1-(5-phospho-D-ribosyl)imidazole from N(2)-formyl-N(1)-(5-phospho-D-ribosyl)glycinamide: step 2/2. In Staphylococcus aureus (strain MRSA252), this protein is Phosphoribosylformylglycinamidine cyclo-ligase.